A 134-amino-acid polypeptide reads, in one-letter code: Snaclec alboaggregin-A subunit alpha' (134 aa).

Residues 1-134 form the C-type lectin domain; sequence DFHCLPGWSA…NPFVCKFPPQ (134 aa). Disulfide bonds link Cys-4-Cys-15, Cys-32-Cys-129, and Cys-104-Cys-121.

This sequence belongs to the snaclec family. Heterotetramer of the subunits alpha, alpha', beta and beta'; disulfide-linked. Expressed by the venom gland.

It is found in the secreted. In terms of biological role, potent platelet activator that aggregates platelets via both GPIbalpha (GP1BA) and GPVI (GP6). Induces a tyrosine phosphorylation profile in platelets that resembles this produced by collagen, involving the time dependent tyrosine phosphorylation of Fc receptor gamma chain (FCGR1A), phospholipase Cgamma2 (PLCG2), and LAT. The chain is Snaclec alboaggregin-A subunit alpha' from Trimeresurus albolabris (White-lipped pit viper).